The primary structure comprises 487 residues: Nitrate reductase beta chain (487 aa).

4Fe-4S ferredoxin-type domains are found at residues 7 to 36 (IGMV…RSGA), 172 to 203 (VFMM…KREE), and 205 to 234 (GIVL…FNWQ). The [4Fe-4S] cluster site is built by cysteine 16, cysteine 19, cysteine 22, cysteine 26, cysteine 181, cysteine 184, and cysteine 189. Residues cysteine 193, cysteine 214, and cysteine 220 each contribute to the [3Fe-4S] cluster site. 5 residues coordinate [4Fe-4S] cluster: cysteine 224, cysteine 241, cysteine 244, cysteine 256, and cysteine 260.

[4Fe-4S] cluster is required as a cofactor. The cofactor is [3Fe-4S] cluster.

It is found in the cell membrane. It catalyses the reaction nitrate + a quinol = a quinone + nitrite + H2O. Its function is as follows. The beta chain is an electron transfer unit containing four cysteine clusters involved in the formation of iron-sulfur centers. Electrons are transferred from the gamma chain to the molybdenum cofactor of the alpha subunit. The chain is Nitrate reductase beta chain (narH) from Bacillus subtilis (strain 168).